Reading from the N-terminus, the 270-residue chain is 4-hydroxy-tetrahydrodipicolinate reductase (270 aa).

NAD(+) contacts are provided by residues 9–14 (GAGGRM) and E35. R36 serves as a coordination point for NADP(+). NAD(+) is bound by residues 99–101 (GTT) and 123–126 (ASNF). H156 functions as the Proton donor/acceptor in the catalytic mechanism. Residue H157 coordinates (S)-2,3,4,5-tetrahydrodipicolinate. The active-site Proton donor is the K160. 166–167 (GT) serves as a coordination point for (S)-2,3,4,5-tetrahydrodipicolinate.

Belongs to the DapB family.

The protein resides in the cytoplasm. It catalyses the reaction (S)-2,3,4,5-tetrahydrodipicolinate + NAD(+) + H2O = (2S,4S)-4-hydroxy-2,3,4,5-tetrahydrodipicolinate + NADH + H(+). The enzyme catalyses (S)-2,3,4,5-tetrahydrodipicolinate + NADP(+) + H2O = (2S,4S)-4-hydroxy-2,3,4,5-tetrahydrodipicolinate + NADPH + H(+). Its pathway is amino-acid biosynthesis; L-lysine biosynthesis via DAP pathway; (S)-tetrahydrodipicolinate from L-aspartate: step 4/4. Catalyzes the conversion of 4-hydroxy-tetrahydrodipicolinate (HTPA) to tetrahydrodipicolinate. This chain is 4-hydroxy-tetrahydrodipicolinate reductase, found in Haemophilus influenzae (strain PittGG).